The primary structure comprises 269 residues: Type 4 prepilin-like proteins leader peptide-processing enzyme (269 aa).

The next 7 helical transmembrane spans lie at 13–33 (MPVLATVGGLIIGSFLNVVIW), 102–122 (YPLVELLTALAFLLASLVWPE), 124–144 (GWALAVMILSAWLIAASVIDL), 147–167 (QWLPDVFTQGVLWTGLIAAWA), 178–198 (VTGVLVGFIAFYSLRWIAGIV), 210–230 (LLFAALGSWVGPLSLPNVALI), and 249–269 (LPFGPCLSLGGIATIYLQALF).

Belongs to the peptidase A24 family.

The protein resides in the cell inner membrane. The enzyme catalyses Typically cleaves a -Gly-|-Phe- bond to release an N-terminal, basic peptide of 5-8 residues from type IV prepilin, and then N-methylates the new N-terminal amino group, the methyl donor being S-adenosyl-L-methionine.. Functionally, cleaves type-4 fimbrial leader sequence and methylates the N-terminal (generally Phe) residue. This Escherichia coli O78:H11 (strain H10407 / ETEC) protein is Type 4 prepilin-like proteins leader peptide-processing enzyme.